The sequence spans 169 residues: Probable prefoldin subunit 3 (169 aa).

The protein belongs to the prefoldin subunit alpha family. As to quaternary structure, heterohexamer of two PFD-alpha type and four PFD-beta type subunits.

Binds specifically to cytosolic chaperonin (c-CPN) and transfers target proteins to it. Binds to nascent polypeptide chain and promotes folding in an environment in which there are many competing pathways for nonnative proteins. The polypeptide is Probable prefoldin subunit 3 (Schizosaccharomyces pombe (strain 972 / ATCC 24843) (Fission yeast)).